Consider the following 539-residue polypeptide: Probable protein kinase UbiB (539 aa).

Residues 125–493 (RFDVEPLASA…RRRQGDRWAL (369 aa)) enclose the Protein kinase domain. ATP is bound by residues 131-139 (LASASVAQV) and Lys-153. Asp-288 serves as the catalytic Proton acceptor. The next 2 membrane-spanning stretches (helical) occupy residues 495–515 (LLGAGLLGGGAVLAASAAEAA) and 517–537 (LAAPAAWPAWLMLAAGLYLIV).

The protein belongs to the ABC1 family. UbiB subfamily.

The protein localises to the cell inner membrane. Its pathway is cofactor biosynthesis; ubiquinone biosynthesis [regulation]. In terms of biological role, is probably a protein kinase regulator of UbiI activity which is involved in aerobic coenzyme Q (ubiquinone) biosynthesis. The sequence is that of Probable protein kinase UbiB from Pseudomonas putida (strain W619).